The primary structure comprises 171 residues: Neuronal vesicle trafficking-associated protein 2 (171 aa).

The tract at residues 1–21 is disordered; sequence MVKLNGNPGEKGAKPPSVEDG. Over 1–71 the chain is Cytoplasmic; it reads MVKLNGNPGE…FRVPKIAEFT (71 aa). The helical; Signal-anchor for type II membrane protein transmembrane segment at 72 to 92 threads the bilayer; the sequence is VTILVSLALAFLACIVFLVVY. At 93-171 the chain is on the lumenal side; the sequence is KAFTYDHSCP…EPKPPKTQGH (79 aa).

Belongs to the NSG family.

The protein localises to the membrane. It is found in the golgi apparatus. It localises to the trans-Golgi network membrane. The protein resides in the cell projection. Its subcellular location is the dendrite. The protein localises to the endosome membrane. It is found in the early endosome membrane. It localises to the late endosome membrane. The protein resides in the lysosome lumen. Its subcellular location is the cytoplasmic vesicle membrane. The protein localises to the golgi stack membrane. It is found in the endosome. It localises to the multivesicular body membrane. The chain is Neuronal vesicle trafficking-associated protein 2 from Rattus norvegicus (Rat).